Consider the following 252-residue polypeptide: Small ribosomal subunit protein uS3 (252 aa).

A KH type-2 domain is found at 38-106 (IRKYIHARLS…EVQINIFEIK (69 aa)). The tract at residues 214-252 (PLAGMDKKQSGTGGGKGGDAPRGKSNFNKGGKPDARKRK) is disordered. A compositionally biased stretch (gly residues) spans 224–233 (GTGGGKGGDA).

It belongs to the universal ribosomal protein uS3 family. In terms of assembly, part of the 30S ribosomal subunit. Forms a tight complex with proteins S10 and S14.

Binds the lower part of the 30S subunit head. Binds mRNA in the 70S ribosome, positioning it for translation. In Flavobacterium johnsoniae (strain ATCC 17061 / DSM 2064 / JCM 8514 / BCRC 14874 / CCUG 350202 / NBRC 14942 / NCIMB 11054 / UW101) (Cytophaga johnsonae), this protein is Small ribosomal subunit protein uS3.